The following is an 84-amino-acid chain: Large ribosomal subunit protein bL28 (84 aa).

The protein belongs to the bacterial ribosomal protein bL28 family.

This chain is Large ribosomal subunit protein bL28, found in Clostridium perfringens (strain 13 / Type A).